A 98-amino-acid chain; its full sequence is Putative pterin-4-alpha-carbinolamine dehydratase (98 aa).

The protein belongs to the pterin-4-alpha-carbinolamine dehydratase family.

The catalysed reaction is (4aS,6R)-4a-hydroxy-L-erythro-5,6,7,8-tetrahydrobiopterin = (6R)-L-erythro-6,7-dihydrobiopterin + H2O. The sequence is that of Putative pterin-4-alpha-carbinolamine dehydratase from Roseobacter denitrificans (strain ATCC 33942 / OCh 114) (Erythrobacter sp. (strain OCh 114)).